The sequence spans 341 residues: Uroporphyrinogen decarboxylase (341 aa).

Residues 23–27 (RQAGR), D73, Y148, S203, and H318 contribute to the substrate site.

It belongs to the uroporphyrinogen decarboxylase family. As to quaternary structure, homodimer.

Its subcellular location is the cytoplasm. The catalysed reaction is uroporphyrinogen III + 4 H(+) = coproporphyrinogen III + 4 CO2. The protein operates within porphyrin-containing compound metabolism; protoporphyrin-IX biosynthesis; coproporphyrinogen-III from 5-aminolevulinate: step 4/4. Catalyzes the decarboxylation of four acetate groups of uroporphyrinogen-III to yield coproporphyrinogen-III. This is Uroporphyrinogen decarboxylase from Brucella ovis (strain ATCC 25840 / 63/290 / NCTC 10512).